Here is a 74-residue protein sequence, read N- to C-terminus: MSVNGAVWGRVRSRFRAFPEHLAACGAEASAYGKCVQASTAPGGRLSKDLCVREFEALRSCFAAAAKKTMMGGS.

The 48-residue stretch at 22 to 69 folds into the CHCH domain; it reads LAACGAEASAYGKCVQASTAPGGRLSKDLCVREFEALRSCFAAAAKKT. 2 short sequence motifs (cx9C motif) span residues 25 to 35 and 51 to 61; these read CGAEASAYGKC and CVREFEALRSC. Cystine bridges form between Cys-25/Cys-61 and Cys-35/Cys-51.

In terms of assembly, interacts with NDUFAF5.

It localises to the mitochondrion. Its function is as follows. Involved in the assembly of mitochondrial NADH:ubiquinone oxidoreductase complex (complex I, MT-ND1). Required to stabilize NDUFAF5. The sequence is that of NADH dehydrogenase [ubiquinone] 1 alpha subcomplex assembly factor 8 from Mus musculus (Mouse).